Reading from the N-terminus, the 199-residue chain is Secreted chorismate mutase (199 aa).

Residues 1 to 33 form the signal peptide; sequence MLTRPREIYLATAVSIGILLSLIAPLGPPLARA. The 80-residue stretch at 34 to 113 folds into the Chorismate mutase domain; sequence DGTSQLAELV…ATEAIEYSRF (80 aa). Substrate-binding positions include arginine 49, lysine 60, aspartate 69, 72–76, 105–109, and arginine 134; these read RVEQQ and TEAIE. Cysteine 160 and cysteine 193 are oxidised to a cystine.

Homodimer.

It is found in the secreted. It carries out the reaction chorismate = prephenate. It participates in metabolic intermediate biosynthesis; prephenate biosynthesis; prephenate from chorismate: step 1/1. With respect to regulation, tyrosine, phenylalanine, and tryptophan moderately enhance chorismate mutase activity at low concentrations, but allosterically inhibit the enzyme at higher concentrations. Its function is as follows. Catalyzes the Claisen rearrangement of chorismate to prephenate. May play some role in the pathogenicity. This Mycobacterium tuberculosis (strain ATCC 25618 / H37Rv) protein is Secreted chorismate mutase.